The following is a 145-amino-acid chain: Putative pre-16S rRNA nuclease (145 aa).

This sequence belongs to the YqgF nuclease family.

Its subcellular location is the cytoplasm. Could be a nuclease involved in processing of the 5'-end of pre-16S rRNA. The protein is Putative pre-16S rRNA nuclease of Thiobacillus denitrificans (strain ATCC 25259 / T1).